The primary structure comprises 358 residues: GMP reductase (358 aa).

Residues 26–27, K78, 130–132, and 181–182 each bind NADP(+); these read SR, DVA, and IG. G182, G184, and C187 together coordinate K(+). C187 serves as the catalytic Thioimidate intermediate. The Proton donor/acceptor role is filled by T189. R190 lines the K(+) pocket. GMP-binding positions include 220 to 222, 243 to 244, 269 to 271, and 287 to 291; these read DGG, GG, GMS, and RASEG. NADP(+) is bound by residues M270, 286–287, and 315–318; these read YR and SACT.

Belongs to the IMPDH/GMPR family. GuaC type 1 subfamily. As to quaternary structure, homotetramer.

It carries out the reaction IMP + NH4(+) + NADP(+) = GMP + NADPH + 2 H(+). In terms of biological role, catalyzes the irreversible NADPH-dependent deamination of GMP to IMP. It functions in the conversion of nucleobase, nucleoside and nucleotide derivatives of G to A nucleotides, and in maintaining the intracellular balance of A and G nucleotides. The polypeptide is GMP reductase (Caenorhabditis elegans).